The sequence spans 179 residues: Cell division protein SepF (179 aa).

The disordered stretch occupies residues aspartate 19–lysine 55. Polar residues predominate over residues threonine 33 to lysine 55.

The protein belongs to the SepF family. Homodimer. Interacts with FtsZ.

It is found in the cytoplasm. Its function is as follows. Cell division protein that is part of the divisome complex and is recruited early to the Z-ring. Probably stimulates Z-ring formation, perhaps through the cross-linking of FtsZ protofilaments. Its function overlaps with FtsA. The sequence is that of Cell division protein SepF from Streptococcus pneumoniae (strain JJA).